Reading from the N-terminus, the 782-residue chain is Endonuclease MutS2 (782 aa).

Position 336–343 (336–343 (GPNTGGKT)) interacts with ATP. The Smr domain maps to 707-782 (LDLRGYRYDE…GFGVTVVEIK (76 aa)).

It belongs to the DNA mismatch repair MutS family. MutS2 subfamily. As to quaternary structure, homodimer. Binds to stalled ribosomes, contacting rRNA.

In terms of biological role, endonuclease that is involved in the suppression of homologous recombination and thus may have a key role in the control of bacterial genetic diversity. Acts as a ribosome collision sensor, splitting the ribosome into its 2 subunits. Detects stalled/collided 70S ribosomes which it binds and splits by an ATP-hydrolysis driven conformational change. Acts upstream of the ribosome quality control system (RQC), a ribosome-associated complex that mediates the extraction of incompletely synthesized nascent chains from stalled ribosomes and their subsequent degradation. Probably generates substrates for RQC. The sequence is that of Endonuclease MutS2 from Staphylococcus saprophyticus subsp. saprophyticus (strain ATCC 15305 / DSM 20229 / NCIMB 8711 / NCTC 7292 / S-41).